A 441-amino-acid polypeptide reads, in one-letter code: E3 ubiquitin-protein ligase APD1 (441 aa).

The next 2 helical transmembrane spans lie at 60–80 and 305–325; these read SNLY…FILI and IAYV…IQFC. The RING-type zinc-finger motif lies at 390–429; that stretch reads CAICFDVPRDCFFLPCGHSVSCYECGTTMQEADGSCPICR.

In terms of tissue distribution, expressed in the shoot apical meristems (SAM), root tips and inflorescences, and, at low levels, in floral buds and pollen.

It is found in the endomembrane system. The protein resides in the vacuole membrane. It catalyses the reaction S-ubiquitinyl-[E2 ubiquitin-conjugating enzyme]-L-cysteine + [acceptor protein]-L-lysine = [E2 ubiquitin-conjugating enzyme]-L-cysteine + N(6)-ubiquitinyl-[acceptor protein]-L-lysine.. The protein operates within protein modification; protein ubiquitination. In terms of biological role, involved in pollen mitosis II (PMII) regulation during male gametogenesis. This chain is E3 ubiquitin-protein ligase APD1, found in Arabidopsis thaliana (Mouse-ear cress).